We begin with the raw amino-acid sequence, 391 residues long: MAIINMSDLDLQGKRVLIREDLNVPVSNGVVTSDARLRASLPTIELALAKGAAVMVMSHLGRPTEGEYNSEFSMQPVVDYLAKALSCTVRLATDYLDGVEVAVGEVVVFENVRFNKGEKKNDEALSKKMAALCDVYVMDAFGTAHRAEASTNGVGLHAPIACAGPLLAQELEALGKALDNPARPLVAIVGGSKVSTKLTVLESLSGIVDQLVVGGGIANTFIAAAGHNVGKSLYEADLIDEAKRLVANAQSRGGDIPVPTDVVVAGEFSPTAAATLKAVNEVGDSDMIFDIGPDSAEALAKIIESAGTIVWNGPVGVFEFDQFGEGTKRIAQAIADSKAFSIAGGGDTLAAVDKYDIADKVSYISTGGGAFLEFLEGKELPAVAMLKQRGA.

Residues 21-23 (DLN), Arg36, 59-62 (HLGR), Arg113, and Arg146 each bind substrate. ATP is bound by residues Lys197, Glu319, and 345-348 (GGDT).

It belongs to the phosphoglycerate kinase family. In terms of assembly, monomer.

Its subcellular location is the cytoplasm. It catalyses the reaction (2R)-3-phosphoglycerate + ATP = (2R)-3-phospho-glyceroyl phosphate + ADP. It participates in carbohydrate degradation; glycolysis; pyruvate from D-glyceraldehyde 3-phosphate: step 2/5. The sequence is that of Phosphoglycerate kinase from Shewanella sp. (strain MR-7).